A 436-amino-acid chain; its full sequence is MLADEVIELLGQEISKNEMENYISQIKFNEKSSNSENIIFTAPNELVTKFIQTRYANKIANIFEVKTGIKPVISITTQKNRVSIKAKDIDVKQIRTQSSLLNPSYTFESFVVGDSNQFAYISSQQAAQNPGKVYNPLFIYGSTGLGKTHLLQSIGNYCLEHGKTVICVTSEQFMSDFIRNVENRTMNKFKEKYRNCDILLIDDIQFFHKSEKTQEEFFHTFNEIHAKKGQIVMTSDKPPKMLKGFEERLKSRFEWGLMADITPPELDTKIRIIKAKCEFDGINLSSDIIEYIATNMGDNIREIESAIININAFANIMRQEITLEFAKNVIKDQIKEKKDNISLENIISCVSHEMNIKPSDIKSKSRTKGIVEARRICIYLAKTLTPNSMPQLATHFGLKDHSAVSHNIKKINEIINNDGYFKARVEELKNKITSKE.

Residues 1-69 (MLADEVIELL…ANIFEVKTGI (69 aa)) form a domain I, interacts with DnaA modulators region. The domain II stretch occupies residues 69–99 (IKPVISITTQKNRVSIKAKDIDVKQIRTQSS). Residues 100–314 (LLNPSYTFES…SAIININAFA (215 aa)) are domain III, AAA+ region. 4 residues coordinate ATP: glycine 144, glycine 146, lysine 147, and threonine 148. A domain IV, binds dsDNA region spans residues 315–436 (NIMRQEITLE…ELKNKITSKE (122 aa)).

This sequence belongs to the DnaA family. In terms of assembly, oligomerizes as a right-handed, spiral filament on DNA at oriC.

It is found in the cytoplasm. Plays an essential role in the initiation and regulation of chromosomal replication. ATP-DnaA binds to the origin of replication (oriC) to initiate formation of the DNA replication initiation complex once per cell cycle. Binds the DnaA box (a 9 base pair repeat at the origin) and separates the double-stranded (ds)DNA. Forms a right-handed helical filament on oriC DNA; dsDNA binds to the exterior of the filament while single-stranded (ss)DNA is stabiized in the filament's interior. The ATP-DnaA-oriC complex binds and stabilizes one strand of the AT-rich DNA unwinding element (DUE), permitting loading of DNA polymerase. After initiation quickly degrades to an ADP-DnaA complex that is not apt for DNA replication. Binds acidic phospholipids. This chain is Chromosomal replication initiator protein DnaA, found in Campylobacter fetus subsp. fetus (strain 82-40).